A 161-amino-acid chain; its full sequence is Nucleotide-binding protein Shew_2893 (161 aa).

The protein belongs to the YajQ family.

Nucleotide-binding protein. The chain is Nucleotide-binding protein Shew_2893 from Shewanella loihica (strain ATCC BAA-1088 / PV-4).